We begin with the raw amino-acid sequence, 128 residues long: Histone H2A type 1-H (128 aa).

The disordered stretch occupies residues 1-22 (MSGRGKQGGKARAKAKTRSSRA). An N-acetylserine modification is found at Ser-2. Ser-2 is modified (phosphoserine; by RPS6KA5). The residue at position 4 (Arg-4) is a Citrulline; alternate. A Symmetric dimethylarginine; by PRMT5; alternate modification is found at Arg-4. An N6-(2-hydroxyisobutyryl)lysine modification is found at Lys-6. The segment covering 7 to 19 (QGGKARAKAKTRS) has biased composition (basic residues). Lys-10 is subject to N6-(2-hydroxyisobutyryl)lysine; alternate. An N6-(beta-hydroxybutyryl)lysine; alternate mark is found at Lys-10 and Lys-14. Residue Lys-10 is modified to N6-lactoyllysine; alternate. Position 10 is an N6-succinyllysine; alternate (Lys-10). Residue Lys-14 forms a Glycyl lysine isopeptide (Lys-Gly) (interchain with G-Cter in ubiquitin); alternate linkage. Lys-16 participates in a covalent cross-link: Glycyl lysine isopeptide (Lys-Gly) (interchain with G-Cter in ubiquitin). N6-(2-hydroxyisobutyryl)lysine; alternate is present on Lys-37. At Lys-37 the chain carries N6-(beta-hydroxybutyryl)lysine; alternate. Lys-37 bears the N6-crotonyllysine; alternate mark. N6-(2-hydroxyisobutyryl)lysine is present on residues Lys-75 and Lys-76. Position 96 is an N6-(2-hydroxyisobutyryl)lysine; alternate (Lys-96). Lys-96 carries the N6-(beta-hydroxybutyryl)lysine; alternate modification. Lys-96 is subject to N6-succinyllysine; alternate. The residue at position 96 (Lys-96) is an N6-glutaryllysine; alternate. Lys-100 is modified (N6-glutaryllysine). Position 105 is an N5-methylglutamine (Gln-105). An N6-(2-hydroxyisobutyryl)lysine; alternate modification is found at Lys-119. The residue at position 119 (Lys-119) is an N6-(beta-hydroxybutyryl)lysine; alternate. N6-crotonyllysine; alternate occurs at positions 119 and 120. N6-glutaryllysine; alternate occurs at positions 119 and 120. Lys-120 participates in a covalent cross-link: Glycyl lysine isopeptide (Lys-Gly) (interchain with G-Cter in ubiquitin); alternate. At Thr-121 the chain carries Phosphothreonine; by DCAF1. Lys-126 carries the N6-crotonyllysine; alternate modification. N6-glutaryllysine; alternate is present on Lys-126.

Belongs to the histone H2A family. The nucleosome is a histone octamer containing two molecules each of H2A, H2B, H3 and H4 assembled in one H3-H4 heterotetramer and two H2A-H2B heterodimers. The octamer wraps approximately 147 bp of DNA. Deiminated on Arg-4 in granulocytes upon calcium entry. In terms of processing, monoubiquitination of Lys-120 (H2AK119Ub) by RING1, TRIM37 and RNF2/RING2 complex gives a specific tag for epigenetic transcriptional repression and participates in X chromosome inactivation of female mammals. It is involved in the initiation of both imprinted and random X inactivation. Ubiquitinated H2A is enriched in inactive X chromosome chromatin. Ubiquitination of H2A functions downstream of methylation of 'Lys-27' of histone H3 (H3K27me). H2AK119Ub by RNF2/RING2 can also be induced by ultraviolet and may be involved in DNA repair. Monoubiquitination of Lys-120 (H2AK119Ub) by TRIM37 may promote transformation of cells in a number of breast cancers. Following DNA double-strand breaks (DSBs), it is ubiquitinated through 'Lys-63' linkage of ubiquitin moieties by the E2 ligase UBE2N and the E3 ligases RNF8 and RNF168, leading to the recruitment of repair proteins to sites of DNA damage. Ubiquitination at Lys-14 and Lys-16 (H2AK13Ub and H2AK15Ub, respectively) in response to DNA damage is initiated by RNF168 that mediates monoubiquitination at these 2 sites, and 'Lys-63'-linked ubiquitin are then conjugated to monoubiquitin; RNF8 is able to extend 'Lys-63'-linked ubiquitin chains in vitro. Deubiquitinated by USP51 at Lys-14 and Lys-16 (H2AK13Ub and H2AK15Ub, respectively) after damaged DNA is repaired. H2AK119Ub and ionizing radiation-induced 'Lys-63'-linked ubiquitination (H2AK13Ub and H2AK15Ub) are distinct events. Post-translationally, phosphorylation on Ser-2 (H2AS1ph) is enhanced during mitosis. Phosphorylation on Ser-2 by RPS6KA5/MSK1 directly represses transcription. Acetylation of H3 inhibits Ser-2 phosphorylation by RPS6KA5/MSK1. Phosphorylation at Thr-121 (H2AT120ph) by DCAF1 is present in the regulatory region of many tumor suppresor genes and down-regulates their transcription. Glutamine methylation at Gln-105 (H2AQ104me) by FBL is specifically dedicated to polymerase I. It is present at 35S ribosomal DNA locus and impairs binding of the FACT complex. In terms of processing, symmetric dimethylation on Arg-4 by the PRDM1/PRMT5 complex may play a crucial role in the germ-cell lineage. Post-translationally, crotonylation (Kcr) is specifically present in male germ cells and marks testis-specific genes in post-meiotic cells, including X-linked genes that escape sex chromosome inactivation in haploid cells. Crotonylation marks active promoters and enhancers and confers resistance to transcriptional repressors. It is also associated with post-meiotically activated genes on autosomes. Lactylated in macrophages by EP300/P300 by using lactoyl-CoA directly derived from endogenous or exogenous lactate, leading to stimulates gene transcription.

The protein localises to the nucleus. It is found in the chromosome. Core component of nucleosome. Nucleosomes wrap and compact DNA into chromatin, limiting DNA accessibility to the cellular machineries which require DNA as a template. Histones thereby play a central role in transcription regulation, DNA repair, DNA replication and chromosomal stability. DNA accessibility is regulated via a complex set of post-translational modifications of histones, also called histone code, and nucleosome remodeling. This is Histone H2A type 1-H from Homo sapiens (Human).